The primary structure comprises 103 residues: Phosphoribosyl-ATP pyrophosphatase (103 aa).

This sequence belongs to the PRA-PH family.

The protein localises to the cytoplasm. The enzyme catalyses 1-(5-phospho-beta-D-ribosyl)-ATP + H2O = 1-(5-phospho-beta-D-ribosyl)-5'-AMP + diphosphate + H(+). The protein operates within amino-acid biosynthesis; L-histidine biosynthesis; L-histidine from 5-phospho-alpha-D-ribose 1-diphosphate: step 2/9. The chain is Phosphoribosyl-ATP pyrophosphatase from Listeria monocytogenes serotype 4a (strain HCC23).